The primary structure comprises 351 residues: Uroporphyrinogen decarboxylase (351 aa).

Residues 27–31 (RQAGR), D77, Y154, T209, and H327 each bind substrate.

Belongs to the uroporphyrinogen decarboxylase family. Homodimer.

It localises to the cytoplasm. The enzyme catalyses uroporphyrinogen III + 4 H(+) = coproporphyrinogen III + 4 CO2. It participates in porphyrin-containing compound metabolism; protoporphyrin-IX biosynthesis; coproporphyrinogen-III from 5-aminolevulinate: step 4/4. Functionally, catalyzes the decarboxylation of four acetate groups of uroporphyrinogen-III to yield coproporphyrinogen-III. The polypeptide is Uroporphyrinogen decarboxylase (Thioalkalivibrio sulfidiphilus (strain HL-EbGR7)).